The primary structure comprises 245 residues: Small ribosomal subunit protein uS2 (245 aa).

It belongs to the universal ribosomal protein uS2 family.

The sequence is that of Small ribosomal subunit protein uS2 from Pseudomonas fluorescens (strain SBW25).